The sequence spans 214 residues: MTRVKICGVTDTEDRDAVVTAGADAVGIIHGVPVDTPREVDEGTAETIADGVPPFVTSVLVMMPTTVQEAVRRIDRIEPDAVQVHDGLSPAELGALNNRITQDIVAVVEADAPAIEDYATHADALLVDSVDADGGGGTGETHDWERTRDLVDSLDVPIVLAGGLTPENVTEAVETVEPFAVDVASGVESAGGTKDHDAVGRFVRNAKQAPEGAV.

The protein belongs to the TrpF family.

It catalyses the reaction N-(5-phospho-beta-D-ribosyl)anthranilate = 1-(2-carboxyphenylamino)-1-deoxy-D-ribulose 5-phosphate. It functions in the pathway amino-acid biosynthesis; L-tryptophan biosynthesis; L-tryptophan from chorismate: step 3/5. The protein is N-(5'-phosphoribosyl)anthranilate isomerase of Haloarcula marismortui (strain ATCC 43049 / DSM 3752 / JCM 8966 / VKM B-1809) (Halobacterium marismortui).